The chain runs to 96 residues: Protein Vpr (96 aa).

Residues 1–42 (MEQAPEDQGPQREPYNEWTLELLEELKNEAVRHFPRIWLHSL) form a homooligomerization region. 3 positions are modified to phosphoserine; by host: Ser-79, Ser-94, and Ser-96.

This sequence belongs to the HIV-1 VPR protein family. Homooligomer, may form homodimer. Interacts with p6-gag region of the Pr55 Gag precursor protein through a (Leu-X-X)4 motif near the C-terminus of the P6gag protein. Interacts with host UNG. May interact with host RAD23A/HHR23A. Interacts with host VPRBP/DCAF1, leading to hijack the CUL4A-RBX1-DDB1-DCAF1/VPRBP complex, mediating ubiquitination of host proteins such as TERT and ZGPAT and arrest of the cell cycle in G2 phase. In terms of processing, phosphorylated on several residues by host. These phosphorylations regulate VPR activity for the nuclear import of the HIV-1 pre-integration complex.

It is found in the virion. The protein resides in the host nucleus. The protein localises to the host extracellular space. Functionally, during virus replication, may deplete host UNG protein, and incude G2-M cell cycle arrest. Acts by targeting specific host proteins for degradation by the 26S proteasome, through association with the cellular CUL4A-DDB1 E3 ligase complex by direct interaction with host VPRPB/DCAF-1. Cell cycle arrest reportedly occurs within hours of infection and is not blocked by antiviral agents, suggesting that it is initiated by the VPR carried into the virion. Additionally, VPR induces apoptosis in a cell cycle dependent manner suggesting that these two effects are mechanistically linked. Detected in the serum and cerebrospinal fluid of AIDS patient, VPR may also induce cell death to bystander cells. In terms of biological role, during virus entry, plays a role in the transport of the viral pre-integration (PIC) complex to the host nucleus. This function is crucial for viral infection of non-dividing macrophages. May act directly at the nuclear pore complex, by binding nucleoporins phenylalanine-glycine (FG)-repeat regions. This chain is Protein Vpr, found in Homo sapiens (Human).